A 728-amino-acid polypeptide reads, in one-letter code: Microtubule-associated protein VP5 (728 aa).

This sequence belongs to the reoviridae microtubule-associated protein family.

It is found in the virion. Its subcellular location is the host cytoplasm. The protein localises to the host cytoskeleton. Its function is as follows. Minor inner capsid component. Displays NTPase and RNA 5'-triphosphatase (RTPase) activities. May function as a cofactor of polymerase. Associates with microtubules and plays a role in the formation, structural organization and morphology of viral inclusions, where the assembly of cores and the replication of viral RNA occur. This Aquareovirus C (isolate Golden shiner/USA/GSRV/1977) (AQRV-C) protein is Microtubule-associated protein VP5 (S5).